Consider the following 175-residue polypeptide: Endothelin-2 (175 aa).

The signal sequence occupies residues 1–21 (MVSAWCSIALALLLALHEGKG). Positions 22-43 (QAAATLEQPASAPKGRGPHLRF) are excised as a propeptide. 2 cysteine pairs are disulfide-bonded: Cys46-Cys60 and Cys48-Cys56. Positions 67-175 (VNTAGQTAPY…IPAYSRWRKR (109 aa)) are excised as a propeptide. Positions 93–108 (CECSTAGDSACATFCH) are endothelin-like.

The protein belongs to the endothelin/sarafotoxin family.

The protein resides in the secreted. In terms of biological role, vasoconstrictor. The chain is Endothelin-2 (Edn2) from Mus musculus (Mouse).